The sequence spans 337 residues: MARIGSFLILLSLTYALTLCICDNASNFGGNKRNLFPDFYRSSCPRAEEIVRSVVAKAFERETRMAASLMRLHFHDCFVQGCDGSLLLDTSGSIVTEKNSNPNSRSARGFEVVDEIKAALENECPNTVSCADALTLAARDSSVLTGGPSWTVPLGRRDSATASRAKPNKDLPEPDNLFDTIFLRFSNEGLNLTDLVALSGSHTIGFSRCTSFRQRLYNQSGSGSPDTTLEKSYAAILRQRCPRSGGDQNLSELDINSAGRFDNSYFKNLIENMGLLNSDQVLFSSNEQSRELVKKYAEDQEEFFEQFAESMIKMGKISPLTGSSGEIRKKCRKINNS.

The signal sequence occupies residues 1–22 (MARIGSFLILLSLTYALTLCIC). N24 carries N-linked (GlcNAc...) asparagine glycosylation. 4 cysteine pairs are disulfide-bonded: C44/C124, C77/C82, C130/C331, and C209/C241. The Proton acceptor role is filled by H75. Ca(2+) contacts are provided by D76, V79, G81, D83, and S85. Substrate is bound at residue P172. N-linked (GlcNAc...) asparagine glycosylation occurs at N191. H202 serves as a coordination point for heme b. Residue T203 coordinates Ca(2+). N-linked (GlcNAc...) asparagine glycosylation is found at N218 and N249. Positions 254, 257, and 262 each coordinate Ca(2+).

It belongs to the peroxidase family. Classical plant (class III) peroxidase subfamily. The cofactor is heme b. Ca(2+) serves as cofactor.

The protein localises to the secreted. It carries out the reaction 2 a phenolic donor + H2O2 = 2 a phenolic radical donor + 2 H2O. In terms of biological role, removal of H(2)O(2), oxidation of toxic reductants, biosynthesis and degradation of lignin, suberization, auxin catabolism, response to environmental stresses such as wounding, pathogen attack and oxidative stress. These functions might be dependent on each isozyme/isoform in each plant tissue. The chain is Peroxidase 14 (PER14) from Arabidopsis thaliana (Mouse-ear cress).